The chain runs to 210 residues: MTNYFDSPFKGKLLSEQVKNPNIKVGRYSYYSGYYHGHSFDDCARYLFPDRDDVDKLIIGSFCSIGSGASFIMAGNQGHRYDWASSFPFFYMQEEPAFSSALDAFQKAGNTVIGNDVWIGSEAMVMPGIKIGHGAVIGSRSLVTKDVEPYAIVGGNPAKKIKKRFTDEEISLLLEMEWWNWSLEKIKAAMPMLCSSNIVGLHKYWLEFAV.

His-79 is a catalytic residue.

It belongs to the transferase hexapeptide repeat family.

The enzyme catalyses chloramphenicol + acetyl-CoA = chloramphenicol 3-acetate + CoA. This enzyme is an effector of chloramphenicol resistance in bacteria. The protein is Chloramphenicol acetyltransferase (catB4) of Klebsiella aerogenes (Enterobacter aerogenes).